The sequence spans 245 residues: 1-(5-phosphoribosyl)-5-[(5-phosphoribosylamino)methylideneamino] imidazole-4-carboxamide isomerase (245 aa).

D8 serves as the catalytic Proton acceptor. D129 functions as the Proton donor in the catalytic mechanism.

This sequence belongs to the HisA/HisF family.

Its subcellular location is the cytoplasm. It catalyses the reaction 1-(5-phospho-beta-D-ribosyl)-5-[(5-phospho-beta-D-ribosylamino)methylideneamino]imidazole-4-carboxamide = 5-[(5-phospho-1-deoxy-D-ribulos-1-ylimino)methylamino]-1-(5-phospho-beta-D-ribosyl)imidazole-4-carboxamide. Its pathway is amino-acid biosynthesis; L-histidine biosynthesis; L-histidine from 5-phospho-alpha-D-ribose 1-diphosphate: step 4/9. In Rhodopseudomonas palustris (strain HaA2), this protein is 1-(5-phosphoribosyl)-5-[(5-phosphoribosylamino)methylideneamino] imidazole-4-carboxamide isomerase.